The following is a 217-amino-acid chain: 3,4-dihydroxy-2-butanone 4-phosphate synthase (217 aa).

Residues 37-38, aspartate 42, 150-154, and glutamate 174 each bind D-ribulose 5-phosphate; these read RE and RRGHT. A Mg(2+)-binding site is contributed by glutamate 38. Histidine 153 lines the Mg(2+) pocket.

It belongs to the DHBP synthase family. In terms of assembly, homodimer. The cofactor is Mg(2+). Mn(2+) serves as cofactor.

The catalysed reaction is D-ribulose 5-phosphate = (2S)-2-hydroxy-3-oxobutyl phosphate + formate + H(+). It participates in cofactor biosynthesis; riboflavin biosynthesis; 2-hydroxy-3-oxobutyl phosphate from D-ribulose 5-phosphate: step 1/1. Functionally, catalyzes the conversion of D-ribulose 5-phosphate to formate and 3,4-dihydroxy-2-butanone 4-phosphate. This Shewanella sediminis (strain HAW-EB3) protein is 3,4-dihydroxy-2-butanone 4-phosphate synthase.